Here is a 472-residue protein sequence, read N- to C-terminus: Tryptophanase (472 aa).

At Lys-270 the chain carries N6-(pyridoxal phosphate)lysine.

This sequence belongs to the beta-eliminating lyase family. In terms of assembly, homotetramer. Requires pyridoxal 5'-phosphate as cofactor.

It catalyses the reaction L-tryptophan + H2O = indole + pyruvate + NH4(+). It functions in the pathway amino-acid degradation; L-tryptophan degradation via pyruvate pathway; indole and pyruvate from L-tryptophan: step 1/1. This chain is Tryptophanase (tnaA), found in Vibrio cholerae serotype O1 (strain ATCC 39315 / El Tor Inaba N16961).